The following is a 132-amino-acid chain: CLAVATA3/ESR (CLE)-related protein ESR2 (132 aa).

The signal sequence occupies residues 1-26; the sequence is MASRMGMVAIVSLFVCALVASTSVNA. Residues 68–132 form a disordered region; the sequence is NRASKQLDSE…IGPPPFLDRY (65 aa). A hydroxyproline mark is found at proline 82 and proline 85. An O-linked (Ara...) hydroxyproline glycan is attached at proline 85. Residues 123–132 show a composition bias toward pro residues; it reads IGPPPFLDRY.

The protein belongs to the CLV3/ESR signal peptide family. The O-glycosylation (arabinosylation) of the hydroxyproline Pro-85 enhances binding affinity of the ESR2p peptide for its receptor. In terms of tissue distribution, seed endosperm.

The protein localises to the secreted. It is found in the extracellular space. Its function is as follows. Extracellular signal peptide that regulates cell fate. The sequence is that of CLAVATA3/ESR (CLE)-related protein ESR2 from Zea mays (Maize).